We begin with the raw amino-acid sequence, 309 residues long: Protein phosphatase 1 regulatory subunit 42 (309 aa).

LRR repeat units follow at residues 29–50, 51–72, 73–94, 95–116, 117–138, 147–168, and 169–190; these read KITH…SLCK, NLSV…NYAT, NLTH…RSLK, KLEK…EGLG, ELRE…LFDP, SLCI…ELLE, and NLNQ…EFLL. The region spanning 204–242 is the LRRCT domain; the sequence is NPVCLKPKYRDRLILVSKSLEFLDGKEIKNIERQFLMNW.

In terms of assembly, interacts with PPP1CC isoform gamma-2; the interaction is direct. Interacts with actin, dynein, KIF5B, KIFC1 and tubulin. Associates with microtubules. Post-translationally, phosphorylated; in the testis.

The protein resides in the cytoplasm. It is found in the cytoskeleton. The protein localises to the microtubule organizing center. It localises to the centrosome. Regulates phosphatase activity of protein phosphatase 1 (PP1) complexes in the testis. The protein is Protein phosphatase 1 regulatory subunit 42 of Homo sapiens (Human).